Reading from the N-terminus, the 473-residue chain is Lactate utilization protein B (473 aa).

4Fe-4S ferredoxin-type domains follow at residues 302–332 (GSEF…GHSY) and 351–380 (YNDY…LHDL). [4Fe-4S] cluster contacts are provided by C311, C314, C317, C321, C364, C367, and C371.

Belongs to the LutB/YkgF family.

Its function is as follows. Is involved in L-lactate degradation and allows cells to grow with lactate as the sole carbon source. Has probably a role as an electron transporter during oxidation of L-lactate. The sequence is that of Lactate utilization protein B from Bacillus cereus (strain AH820).